We begin with the raw amino-acid sequence, 309 residues long: S-methyl-5'-thioadenosine phosphorylase (309 aa).

Phosphate is bound by residues T19, 64–65, and 97–98; these read RH and SA. M201 serves as a coordination point for substrate. S202 is a phosphate binding site. 225 to 227 serves as a coordination point for substrate; sequence DYD.

The protein belongs to the PNP/MTAP phosphorylase family. MTAP subfamily. As to quaternary structure, homotrimer.

Its subcellular location is the cytoplasm. The protein localises to the nucleus. The enzyme catalyses S-methyl-5'-thioadenosine + phosphate = 5-(methylsulfanyl)-alpha-D-ribose 1-phosphate + adenine. It functions in the pathway amino-acid biosynthesis; L-methionine biosynthesis via salvage pathway; S-methyl-5-thio-alpha-D-ribose 1-phosphate from S-methyl-5'-thioadenosine (phosphorylase route): step 1/1. Catalyzes the reversible phosphorylation of S-methyl-5'-thioadenosine (MTA) to adenine and 5-methylthioribose-1-phosphate. Involved in the breakdown of MTA, a major by-product of polyamine biosynthesis. Responsible for the first step in the methionine salvage pathway after MTA has been generated from S-adenosylmethionine. Has broad substrate specificity with 6-aminopurine nucleosides as preferred substrates. This Tuber melanosporum (strain Mel28) (Perigord black truffle) protein is S-methyl-5'-thioadenosine phosphorylase.